We begin with the raw amino-acid sequence, 362 residues long: Phosphate acyltransferase (362 aa).

Residues 343–362 form a disordered region; that stretch reads TKKISTSTINPKTSETTKES. Positions 344-356 are enriched in polar residues; the sequence is KKISTSTINPKTS.

Belongs to the PlsX family. As to quaternary structure, homodimer. Probably interacts with PlsY.

Its subcellular location is the cytoplasm. It carries out the reaction a fatty acyl-[ACP] + phosphate = an acyl phosphate + holo-[ACP]. It functions in the pathway lipid metabolism; phospholipid metabolism. Its function is as follows. Catalyzes the reversible formation of acyl-phosphate (acyl-PO(4)) from acyl-[acyl-carrier-protein] (acyl-ACP). This enzyme utilizes acyl-ACP as fatty acyl donor, but not acyl-CoA. This Aster yellows witches'-broom phytoplasma (strain AYWB) protein is Phosphate acyltransferase.